Here is a 348-residue protein sequence, read N- to C-terminus: MSNDWIFGACAVPDARMRSAALARQEQLTKPPGALGRLEQLAVQVAAWQRTEHPAVQRVWIAVYAADHGVAAEGVSAFPQAVTGEMVRNFARGGAAIAVLARELGARLEVVNLGVVNDPGDLSRVRRAWIAPSTANICEQPAMTATQLRDALAAGAHSIAQAKSCDTQLFVGGEMGIGNTTAAAALGCALLSQFPQALAGAGTGLDAEGIAHKVTVITRALALHADASTPLERLRRLGGFEIAALVGAYIAAAQAGIPVLVDGFIATAAALVATRLNPGVREWLLFGHRSQERGHAALLRALDAEPLLQLDLRLGEASGAAVAIPLLRSACALHNGMATFAEAGVSDA.

Residue Glu316 is the Proton acceptor of the active site.

It belongs to the CobT family.

It catalyses the reaction 5,6-dimethylbenzimidazole + nicotinate beta-D-ribonucleotide = alpha-ribazole 5'-phosphate + nicotinate + H(+). The protein operates within nucleoside biosynthesis; alpha-ribazole biosynthesis; alpha-ribazole from 5,6-dimethylbenzimidazole: step 1/2. Catalyzes the synthesis of alpha-ribazole-5'-phosphate from nicotinate mononucleotide (NAMN) and 5,6-dimethylbenzimidazole (DMB). This is Nicotinate-nucleotide--dimethylbenzimidazole phosphoribosyltransferase from Xanthomonas oryzae pv. oryzae (strain PXO99A).